The primary structure comprises 643 residues: MSFIMSSLRNLFLSPLRSFIQKDFHDAFDSMTLLDKLLFMMVHFVDKLILWHRLPVFLGLAYLAARRHLHQEYNLINVGRTPTGVRSNPEDYPYRTADGKYNDPFNEGAGSQFSFFGRNVMPVDQHDKLKKPDPMVVATKLLARKNFMDTGKQFNMIAASWIQFMIHDWIDHLEDTHQIELRAPEEVASECPLKSFKFYKSKKTPTGFYEIKTGYLNRRTSWWDGSAIYGSNTEALKKVRTFEDGKLKLSADGLLEQDENGNIISGDVRNPWAGLLALQALFIQEHNLVCDTLKKEYPKLEDEDLYRHARLVTSAVIAKVHTIDWTVELLKTDTLLAGMRANWYGLLGKKFKDTFGHVGGSSLGGFVGMKKPENHGVPYSLTEEFVSVYRMHQLLPDTLQLRNIDATPGPNKSLPLTNEIPMEDLIGGKGEENLSRIGYTKQMVSMGHQACGALELMNYPIWMRDLIPQDVDGNDRPDHIDLAALEIYRDRERSVARYNEFRRRMLQIPISKWEDLTDDEEAIKMLREVYGDDVEELDLLVGMSAEKKIKGFAISETAFFIFLIMASRRLEADKFFTSNYNEETYTKKGLEWVNTTESLKDVLDRHYPEMTGKWMNSNSAFSVWDSSPEPHNPIPIYFRVPQQ.

Catalysis depends on His167, which acts as the Proton acceptor. Residue Asp168 coordinates Ca(2+). His172 contacts heme b. Ca(2+)-binding residues include Thr220, Trp222, Asp224, and Ser226. Heme b contacts are provided by His392, Arg489, and Arg493.

It belongs to the peroxidase family. Heme b serves as cofactor. It depends on Ca(2+) as a cofactor.

Functionally, alpha-dioxygenase that catalyzes the primary oxygenation step of a variety of 14-20 carbon fatty acids, containing up to three unsaturated bonds, into their corresponding 2R-hydroperoxides. Involved in the production of oxylipins that function in cell signaling, wound healing, and protection from infection. The lipid-derived signaling pathway is involved in the initial response of hot pepper plants to pathogen infection. The chain is Alpha-dioxygenase 1 from Capsicum annuum (Capsicum pepper).